Consider the following 476-residue polypeptide: Serine/threonine-protein kinase PknF (476 aa).

The region spanning 12-279 is the Protein kinase domain; sequence FTIVRQLGSG…FARALGHRLG (268 aa). ATP is bound by residues 18-26 and Lys-41; that span reads LGSGGMGEV. The active-site Proton acceptor is Asp-137. The helical transmembrane segment at 306 to 326 threads the bilayer; the sequence is TAVIVPAVLAMLLVMAVAVAV. Positions 332–376 are disordered; that stretch reads ADDERAAQPARTRTTTSAGTTTSVAPASTTRPAPTTPTTTGAADT. Over residues 338–376 the composition is skewed to low complexity; it reads AQPARTRTTTSAGTTTSVAPASTTRPAPTTPTTTGAADT.

It belongs to the protein kinase superfamily. Ser/Thr protein kinase family. In terms of processing, autophosphorylated. Dephosphorylated by PstP.

The protein localises to the cell membrane. The enzyme catalyses L-seryl-[protein] + ATP = O-phospho-L-seryl-[protein] + ADP + H(+). It carries out the reaction L-threonyl-[protein] + ATP = O-phospho-L-threonyl-[protein] + ADP + H(+). In terms of biological role, a serine/threonine-protein kinase, acts on HupB in vitro. The chain is Serine/threonine-protein kinase PknF from Mycobacterium tuberculosis (strain ATCC 25177 / H37Ra).